The following is a 92-amino-acid chain: WAP four-disulfide core domain protein 12 (92 aa).

Positions 1–23 (MGSSRFLVLMVSLALVTLVAAEG) are cleaved as a signal peptide. The region spanning 27–74 (NIEKPEVCPADNVRCIKSDPPQCHTDQDCQGIRKCCYLHCGFKCVIPV) is the WAP domain. 4 disulfide bridges follow: C34/C62, C41/C66, C49/C61, and C55/C70.

It localises to the secreted. Its function is as follows. Antibacterial protein. Putative acid-stable proteinase inhibitor. This Aotus nancymaae (Ma's night monkey) protein is WAP four-disulfide core domain protein 12 (WFDC12).